Reading from the N-terminus, the 446-residue chain is Chromosomal replication initiator protein DnaA (446 aa).

Positions 1–81 (MENISDLWNS…AKLAIRFIIP (81 aa)) are domain I, interacts with DnaA modulators. Residues 81–109 (PQSQAEEDIDLPPVKRNPAQDDSAHLPQS) are domain II. A domain III, AAA+ region region spans residues 110-326 (MLNPKYTFDT…GALIRVVAYS (217 aa)). 4 residues coordinate ATP: Gly154, Gly156, Lys157, and Thr158. The tract at residues 327-446 (SLINKDINAD…QVEEINGILK (120 aa)) is domain IV, binds dsDNA.

Belongs to the DnaA family. As to quaternary structure, oligomerizes as a right-handed, spiral filament on DNA at oriC.

It is found in the cytoplasm. Functionally, plays an essential role in the initiation and regulation of chromosomal replication. ATP-DnaA binds to the origin of replication (oriC) to initiate formation of the DNA replication initiation complex once per cell cycle. Binds the DnaA box (a 9 base pair repeat at the origin) and separates the double-stranded (ds)DNA. Forms a right-handed helical filament on oriC DNA; dsDNA binds to the exterior of the filament while single-stranded (ss)DNA is stabiized in the filament's interior. The ATP-DnaA-oriC complex binds and stabilizes one strand of the AT-rich DNA unwinding element (DUE), permitting loading of DNA polymerase. After initiation quickly degrades to an ADP-DnaA complex that is not apt for DNA replication. Binds acidic phospholipids. The protein is Chromosomal replication initiator protein DnaA of Bacillus cereus (strain G9842).